The following is a 212-amino-acid chain: Small ribosomal subunit protein uS4c (212 aa).

An S4 RNA-binding domain is found at 89-152 (MRLDNIIFRL…RSRALVDKNL (64 aa)).

The protein belongs to the universal ribosomal protein uS4 family. As to quaternary structure, part of the 30S ribosomal subunit. Contacts protein S5. The interaction surface between S4 and S5 is involved in control of translational fidelity.

It is found in the plastid. Its subcellular location is the chloroplast. One of the primary rRNA binding proteins, it binds directly to 16S rRNA where it nucleates assembly of the body of the 30S subunit. Its function is as follows. With S5 and S12 plays an important role in translational accuracy. The sequence is that of Small ribosomal subunit protein uS4c (rps4) from Staurastrum punctulatum (Green alga).